The sequence spans 427 residues: O-methyltransferase sol2 (427 aa).

Position 281 (Asp281) interacts with S-adenosyl-L-methionine. Catalysis depends on His327, which acts as the Proton acceptor.

The protein belongs to the class I-like SAM-binding methyltransferase superfamily. Cation-independent O-methyltransferase family. COMT subfamily.

It participates in phytotoxin biosynthesis. O-methyltransferase; part of the gene cluster that mediates the biosynthesis of the phytotoxin solanapyrone, a causal agent of early blight disease of potato and tomato. The prosolanapyrone synthase sol1 is a polyketide synthase that produces the octaketide desmethylprosolanapyrone I via sequential condensations of 7 malonyl-CoA units with one acetyl-CoA unit, and one methylation step. The octaketide backbone is further methylated by the sol2 O-methyltransferase to yield prosolanapyrone I. Prosolanapyrone I is hydroxylated to prosolanapyrone II by the cytochrome P450 monooxygenase sol6. The solanapyrone synthase sol5 then catalyzes the oxidation of prosolanapyrone II and the subsequent Diels Alder cycloisomerization of the product prosolanapyrone III to solanapyrones A and D. Solanapyrones A and D are then converted into solanapyrones B and E, respectively, by the sol3 dehydrogenase. The polypeptide is O-methyltransferase sol2 (sol2) (Alternaria solani).